The chain runs to 316 residues: MYSKILGTGSYLPSQIRTNADLEKMVETSDEWIVARTGIKERRIAAENETVADMGFYAAQNAIEMAGIDKNDIDLIIVATTSGSHTFPSSACQVQAKLGIKGCPAFARAAACSGFVYALSIADQHIKTGMCKNVLVIGSDTLSKTCDPTDRSTIILFGDGAGAVVVGASEEPGILSTHIYADGEFGDLLSLEVPERGKDADKWLHMAGNEVFKVAVTQLSKLVKDTLEANGMHKSELDWLVPHQANYRIISATAKKLSMSLDQVVITLDRHGNTSAATVPTALDEAVRDGRIQRGQTLLLEAFGGGFTWGSALVRF.

Catalysis depends on residues C112 and H243. An ACP-binding region spans residues 244 to 248 (QANYR). N273 is a catalytic residue.

It belongs to the thiolase-like superfamily. FabH family. Homodimer.

The protein localises to the cytoplasm. The enzyme catalyses malonyl-[ACP] + acetyl-CoA + H(+) = 3-oxobutanoyl-[ACP] + CO2 + CoA. Its pathway is lipid metabolism; fatty acid biosynthesis. Catalyzes the condensation reaction of fatty acid synthesis by the addition to an acyl acceptor of two carbons from malonyl-ACP. Catalyzes the first condensation reaction which initiates fatty acid synthesis and may therefore play a role in governing the total rate of fatty acid production. Possesses both acetoacetyl-ACP synthase and acetyl transacylase activities. Its substrate specificity determines the biosynthesis of branched-chain and/or straight-chain of fatty acids. This chain is Beta-ketoacyl-[acyl-carrier-protein] synthase III 1, found in Vibrio vulnificus (strain CMCP6).